Consider the following 361-residue polypeptide: Protein RecA (361 aa).

77–84 (GPESSGKT) is a binding site for ATP.

It belongs to the RecA family.

Its subcellular location is the cytoplasm. Can catalyze the hydrolysis of ATP in the presence of single-stranded DNA, the ATP-dependent uptake of single-stranded DNA by duplex DNA, and the ATP-dependent hybridization of homologous single-stranded DNAs. It interacts with LexA causing its activation and leading to its autocatalytic cleavage. This is Protein RecA from Brucella abortus (strain S19).